Here is a 198-residue protein sequence, read N- to C-terminus: Probable chemoreceptor glutamine deamidase CheD (198 aa).

Belongs to the CheD family.

The enzyme catalyses L-glutaminyl-[protein] + H2O = L-glutamyl-[protein] + NH4(+). In terms of biological role, probably deamidates glutamine residues to glutamate on methyl-accepting chemotaxis receptors (MCPs), playing an important role in chemotaxis. This chain is Probable chemoreceptor glutamine deamidase CheD, found in Xanthomonas euvesicatoria pv. vesicatoria (strain 85-10) (Xanthomonas campestris pv. vesicatoria).